The chain runs to 99 residues: Putative septation protein SpoVG (99 aa).

This sequence belongs to the SpoVG family.

Functionally, could be involved in septation. In Onion yellows phytoplasma (strain OY-M), this protein is Putative septation protein SpoVG.